Reading from the N-terminus, the 710-residue chain is Serine/threonine-protein phosphatase PP-Z2 (710 aa).

The segment at 1–382 is disordered; sequence MGNSGSKQHT…ADGDNGSRTN (382 aa). Glycine 2 is lipidated: N-myristoyl glycine. The segment covering 15-27 has biased composition (basic and acidic residues); sequence KKDDHDGDRKKTL. Over residues 40-49 the composition is skewed to low complexity; sequence SLKSSRSLRS. Phosphoserine occurs at positions 55 and 71. 2 stretches are compositionally biased toward polar residues: residues 62–77 and 95–104; these read NVQA…SSTL and PNNHYLTSHP. 2 stretches are compositionally biased toward low complexity: residues 105 to 125 and 143 to 155; these read SSSR…NNNS and NSTS…SFNS. Over residues 160-172 the composition is skewed to acidic residues; that stretch reads LTDDDDDRGDDGG. At threonine 161 the chain carries Phosphothreonine. Residues serine 203 and serine 224 each carry the phosphoserine modification. A compositionally biased stretch (low complexity) spans 247-260; it reads SNRSNSHASSRKSS. A compositionally biased stretch (polar residues) spans 261–273; it reads FGSTGNTAYSTPL. Position 271 is a phosphothreonine (threonine 271). Serine 275 carries the post-translational modification Phosphoserine. Residues 291–302 are compositionally biased toward polar residues; sequence DNVNGRGTSPIP. A Phosphoserine modification is found at serine 310. 4 residues coordinate Mn(2+): aspartate 454, histidine 456, aspartate 482, and asparagine 514. Histidine 515 serves as the catalytic Proton donor. 2 residues coordinate Mn(2+): histidine 563 and histidine 638.

It belongs to the PPP phosphatase family. PP-Z subfamily. It depends on Mn(2+) as a cofactor.

It catalyses the reaction O-phospho-L-seryl-[protein] + H2O = L-seryl-[protein] + phosphate. The catalysed reaction is O-phospho-L-threonyl-[protein] + H2O = L-threonyl-[protein] + phosphate. Functionally, essential for the maintenance of cell size and integrity in response to osmotic stress. The polypeptide is Serine/threonine-protein phosphatase PP-Z2 (PPZ2) (Saccharomyces cerevisiae (strain ATCC 204508 / S288c) (Baker's yeast)).